Reading from the N-terminus, the 3933-residue chain is Protein DOP1 homolog PFC0245c (3933 aa).

4 helical membrane passes run 70-90, 98-118, 140-160, and 163-183; these read LNPL…SSIF, FINN…HCTI, IFAY…NNIL, and IYSI…WLLL. 3 disordered regions span residues 468–494, 543–600, and 614–656; these read RLNN…KYQG, ININ…NMLH, and KKIN…SSSS. Positions 470-486 are enriched in low complexity; that stretch reads NNNNNNNNNNNNNNNNN. Positions 546 to 561 are enriched in acidic residues; sequence NDDDNLNYDDNEDDEY. Composition is skewed to low complexity over residues 563–576 and 585–597; these read NYHN…NYFN and ENNN…NNNN. The stretch at 620-651 forms a coiled coil; it reads GQTNNYDDDEEEEDEEEEDNNNNTSYNNNNNN. The span at 625-639 shows a compositional bias: acidic residues; sequence YDDDEEEEDEEEEDN. The span at 640–656 shows a compositional bias: low complexity; it reads NNNTSYNNNNNNSSSSS. The next 3 membrane-spanning stretches (helical) occupy residues 782–802, 842–862, and 1186–1206; these read MLNL…YTFY, YLYI…MNFL, and FYFW…KSLL. The segment covering 1216-1255 has biased composition (acidic residues); that stretch reads DDTDDDDDDDDDDDDEEEDDDDEDDDDEDDEEEDDEEDLG. Disordered stretches follow at residues 1216–1284 and 1361–1405; these read DDTD…MNKK and TNNN…NNFN. Positions 1263–1284 are enriched in basic residues; the sequence is SSKKGKKKKKKSVHKNKLMNKK. Residues 1349-1403 are a coiled coil; it reads ELNKMKYMNEDITNNNNNINNNSNNNNNNKNNINNNNNNNNNNNNNNNNLNNLNN. The span at 1362 to 1405 shows a compositional bias: low complexity; the sequence is NNNNNINNNSNNNNNNKNNINNNNNNNNNNNNNNNNLNNLNNFN. The next 2 helical transmembrane spans lie at 1462 to 1482 and 1997 to 2017; these read FIKL…MFCL and KNIF…KLIY. The tract at residues 2691–2739 is disordered; sequence HRRKMNRQNIRTDSSNNNNNNNINSNNNNNNNNNNNNNNNNNNNNNIYN. The span at 2704–2739 shows a compositional bias: low complexity; that stretch reads SSNNNNNNNINSNNNNNNNNNNNNNNNNNNNNNIYN. Helical transmembrane passes span 2860-2880, 2905-2925, 3017-3037, 3200-3220, and 3276-3296; these read INLN…CTLT, IMSS…HIYV, YSEI…YHTV, ILIL…YIII, and IIIN…SWIF. Residues 3620-3646 form a disordered region; the sequence is LKNEKSTRTYNSSLQEGSDYDEEEDEE. Acidic residues predominate over residues 3637–3646; the sequence is SDYDEEEDEE. A coiled-coil region spans residues 3897 to 3925; sequence KEETIILLKELNSVENDINDLFLEVDLNE.

It belongs to the DOP1 family.

Its subcellular location is the membrane. Functionally, may be involved in protein traffic between late Golgi and early endosomes. This chain is Protein DOP1 homolog PFC0245c, found in Plasmodium falciparum (isolate 3D7).